Reading from the N-terminus, the 183-residue chain is Ribosome maturation factor RimM (183 aa).

In terms of domain architecture, PRC barrel spans 102–183 (DDDFYWHQLE…CITVDWDPEF (82 aa)).

The protein belongs to the RimM family. Binds ribosomal protein uS19.

It localises to the cytoplasm. Functionally, an accessory protein needed during the final step in the assembly of 30S ribosomal subunit, possibly for assembly of the head region. Essential for efficient processing of 16S rRNA. May be needed both before and after RbfA during the maturation of 16S rRNA. It has affinity for free ribosomal 30S subunits but not for 70S ribosomes. In Saccharophagus degradans (strain 2-40 / ATCC 43961 / DSM 17024), this protein is Ribosome maturation factor RimM.